A 106-amino-acid chain; its full sequence is uncharacterized protein (106 aa).

The protein localises to the mitochondrion. This is an uncharacterized protein from Arabidopsis thaliana (Mouse-ear cress).